A 281-amino-acid polypeptide reads, in one-letter code: NADPH-dependent 7-cyano-7-deazaguanine reductase (281 aa).

88–90 (IES) is a binding site for substrate. Position 90-91 (90-91 (SK)) interacts with NADPH. The Thioimide intermediate role is filled by Cys189. Asp196 functions as the Proton donor in the catalytic mechanism. 228 to 229 (HE) serves as a coordination point for substrate. An NADPH-binding site is contributed by 257–258 (RG).

The protein belongs to the GTP cyclohydrolase I family. QueF type 2 subfamily. In terms of assembly, homodimer.

Its subcellular location is the cytoplasm. The catalysed reaction is 7-aminomethyl-7-carbaguanine + 2 NADP(+) = 7-cyano-7-deazaguanine + 2 NADPH + 3 H(+). It participates in tRNA modification; tRNA-queuosine biosynthesis. In terms of biological role, catalyzes the NADPH-dependent reduction of 7-cyano-7-deazaguanine (preQ0) to 7-aminomethyl-7-deazaguanine (preQ1). The chain is NADPH-dependent 7-cyano-7-deazaguanine reductase from Yersinia enterocolitica serotype O:8 / biotype 1B (strain NCTC 13174 / 8081).